A 104-amino-acid polypeptide reads, in one-letter code: Integration host factor subunit beta (104 aa).

It belongs to the bacterial histone-like protein family. In terms of assembly, heterodimer of an alpha and a beta chain.

Functionally, this protein is one of the two subunits of integration host factor, a specific DNA-binding protein that functions in genetic recombination as well as in transcriptional and translational control. This chain is Integration host factor subunit beta, found in Chromobacterium violaceum (strain ATCC 12472 / DSM 30191 / JCM 1249 / CCUG 213 / NBRC 12614 / NCIMB 9131 / NCTC 9757 / MK).